The sequence spans 195 residues: Endoribonuclease YbeY (195 aa).

Zn(2+)-binding residues include H152, H156, and H162.

The protein belongs to the endoribonuclease YbeY family. Requires Zn(2+) as cofactor.

The protein resides in the cytoplasm. Single strand-specific metallo-endoribonuclease involved in late-stage 70S ribosome quality control and in maturation of the 3' terminus of the 16S rRNA. In Rhodopseudomonas palustris (strain BisB5), this protein is Endoribonuclease YbeY.